Reading from the N-terminus, the 438-residue chain is Exosome complex component RRP45B (438 aa).

2 disordered regions span residues 293–322 (PTLAKSEVSGPTVAVKEEHRKSSDQERAAE) and 334–438 (STEE…KNKS). Composition is skewed to basic and acidic residues over residues 307–322 (VKEEHRKSSDQERAAE) and 334–347 (STEEVRSSKEEEAA). Positions 380 to 394 (TKSSSTKKMNGSGNA) are enriched in polar residues. Positions 410 to 429 (LGKKDTKHKDGEMTLKDAVK) are enriched in basic and acidic residues.

It belongs to the RNase PH family.

It localises to the cytoplasm. The protein localises to the nucleus. Probable 3'-&gt;5' exoribonuclease involved in the regulation of cuticular wax biosynthesis by controlling the expression of CER3. May act by degrading a specific mRNA species encoding a negative regulator of CER3 transcription. Can perform exosomal functions and complement the yeast rrp45 null mutant. The protein is Exosome complex component RRP45B of Arabidopsis thaliana (Mouse-ear cress).